Consider the following 385-residue polypeptide: cAMP-dependent protein kinase regulatory subunit (385 aa).

Polar residues predominate over residues 1–22 (MSSTGFTSPFGNANPFGSSGRS). Disordered stretches follow at residues 1–51 (MSST…GVKN) and 77–111 (DFPA…PVHP). A dimerization and phosphorylation region spans residues 1–128 (MSSTGFTSPF…RLKKAISGNF (128 aa)). At serine 89 the chain carries Phosphoserine. Residues 129–260 (LFNH…EEVP), glutamate 207, arginine 216, 261–378 (ILKT…EAEE), glutamate 328, and arginine 337 each bind 3',5'-cyclic AMP.

It belongs to the cAMP-dependent kinase regulatory chain family. In terms of assembly, tetramer, composed of 2 regulatory (R) and 2 catalytic (C) subunits. In the presence of cAMP it dissociates into 2 active monomeric C subunits and an R dimer.

This is cAMP-dependent protein kinase regulatory subunit (mcb) from Neurospora crassa (strain ATCC 24698 / 74-OR23-1A / CBS 708.71 / DSM 1257 / FGSC 987).